The chain runs to 278 residues: Pantothenate synthetase (278 aa).

ATP is bound at residue 26–33; sequence MGNLHEGH. Histidine 33 functions as the Proton donor in the catalytic mechanism. Glutamine 57 contributes to the (R)-pantoate binding site. Residue glutamine 57 coordinates beta-alanine. 144–147 is an ATP binding site; the sequence is GKKD. Glutamine 150 contacts (R)-pantoate. ATP-binding positions include glycine 173 and 181 to 184; that span reads LSSR.

It belongs to the pantothenate synthetase family. As to quaternary structure, homodimer.

It localises to the cytoplasm. It catalyses the reaction (R)-pantoate + beta-alanine + ATP = (R)-pantothenate + AMP + diphosphate + H(+). It functions in the pathway cofactor biosynthesis; (R)-pantothenate biosynthesis; (R)-pantothenate from (R)-pantoate and beta-alanine: step 1/1. Functionally, catalyzes the condensation of pantoate with beta-alanine in an ATP-dependent reaction via a pantoyl-adenylate intermediate. In Neisseria meningitidis serogroup C / serotype 2a (strain ATCC 700532 / DSM 15464 / FAM18), this protein is Pantothenate synthetase.